We begin with the raw amino-acid sequence, 1304 residues long: Myosin-1 (1304 aa).

Residues 1 to 12 (MAIVKRGVRTKN) show a composition bias toward basic residues. Residues 1-24 (MAIVKRGVRTKNKQSQQPSKSGIK) are disordered. In terms of domain architecture, Myosin motor spans 36–730 (VGVSDLTLLS…TLFALEDMRD (695 aa)). Residue 129-136 (GESGAGKT) coordinates ATP. Ser-364 is subject to Phosphoserine. An actin-binding region spans residues 413–496 (SIGILDIYGF…PGLFAALNDS (84 aa)). IQ domains lie at 734–754 (HNMA…KDDA) and 755–780 (ARLI…YGNG). One can recognise a TH1 domain in the interval 788 to 978 (RRRMSMLGSR…TVTVRQGLPG (191 aa)). 2 disordered regions span residues 963 to 1162 (DSYK…TYKA) and 1214 to 1304 (ECDP…DDDW). Composition is skewed to polar residues over residues 964 to 983 (SYKS…SQNP) and 1001 to 1012 (RGSNMRSTSSYQ). Composition is skewed to low complexity over residues 1029-1052 (QPPV…PQAQ), 1072-1096 (QPHA…PQAQ), and 1120-1140 (PSAP…KKNV). Residues 1141-1156 (APPPPPAAASPPPKPK) show a composition bias toward pro residues. In terms of domain architecture, SH3 spans 1155–1217 (PKFPTYKAAY…PAAYVVECDP (63 aa)). Low complexity-rich tracts occupy residues 1217 to 1227 (PPANSPAGNAK) and 1236 to 1256 (LNSA…NGAG). Acidic residues predominate over residues 1292–1304 (DSDEEDEEDDDDW).

Belongs to the TRAFAC class myosin-kinesin ATPase superfamily. Myosin family. In terms of processing, phosphorylation of the TEDS site (Ser-364) is required for the polarization of the actin cytoskeleton. Phosphorylation probably activates the myosin-I ATPase activity.

The protein resides in the cytoplasm. Its subcellular location is the cytoskeleton. The protein localises to the actin patch. Functionally, type-I myosin implicated in the organization of the actin cytoskeleton. Required for proper actin cytoskeleton polarization. At the cell cortex, assembles in patch-like structures together with proteins from the actin-polymerizing machinery and promotes actin assembly. Functions as actin nucleation-promoting factor (NPF) for the Arp2/3 complex. This Debaryomyces hansenii (strain ATCC 36239 / CBS 767 / BCRC 21394 / JCM 1990 / NBRC 0083 / IGC 2968) (Yeast) protein is Myosin-1 (MYO1).